The following is a 461-amino-acid chain: MPSVAIAGAGLVGALNACFFAQKGWDVSVYEFRKDIRTMKHVQGRSINLALSQRGKSALEAVGLKEYIVNQGVPLYARLVHNKDGKTYSRQPYGKPGEHIVSINRRHLNEVMITQAEKSPNVKFFFEHKVKSVDYDKKQLVVQCTSQPSRIPTFGTKSPPAEHEEFHVEADLIIACDGAYSAVRRSLMTIPRFDFSQEYIEHGYVELNIMANNNEFAFEENVFHLWPRGHFTLIALANRDKTFTVTIFAPFTEFEKHMSTTEEVLSFFEENFPDAYLLLGKEHIADTFNRVKPQSLVSIKCSPHSFFNNLVLMGDAAHAMVPFYGQGMNCGFEDCLVFSETLEEQNNDIASAVQVYSERRVNDAHTINDLAMYNYEELKDLVNKNSYKLRKKFDGFMNAIFPKSWIPLYSMVTFTRIPYSEVVDRRRKQDRILSNLWKTTSTLALIGAAIGIYSNRGRLGL.

2 helical membrane-spanning segments follow: residues 395–415 (GFMNAIFPKSWIPLYSMVTFT) and 432–452 (ILSNLWKTTSTLALIGAAIGI).

Belongs to the aromatic-ring hydroxylase family. KMO subfamily. FAD is required as a cofactor.

The protein resides in the mitochondrion. Its subcellular location is the membrane. The enzyme catalyses L-kynurenine + NADPH + O2 + H(+) = 3-hydroxy-L-kynurenine + NADP(+) + H2O. It functions in the pathway cofactor biosynthesis; NAD(+) biosynthesis; quinolinate from L-kynurenine: step 1/3. Functionally, catalyzes the hydroxylation of L-kynurenine (L-Kyn) to form 3-hydroxy-L-kynurenine (L-3OHKyn). Required for synthesis of quinolinic acid. The chain is Kynurenine 3-monooxygenase from Caenorhabditis briggsae.